A 1079-amino-acid chain; its full sequence is Electrogenic sodium bicarbonate cotransporter 1 (1079 aa).

Positions 1 to 62 (MEDEAVLDRG…EKKEKERISE (62 aa)) are required for interaction with AHCYL1. The Cytoplasmic portion of the chain corresponds to 1-466 (MEDEAVLDRG…FASDFYDALN (466 aa)). Phosphoserine is present on Glu-21. At Tyr-30 the chain carries Phosphotyrosine. Over residues 39–52 (YRRRRRHKRKAGHK) the composition is skewed to basic residues. Residues 39-78 (YRRRRRHKRKAGHKEKKEKERISENYSDKSDVENADESSS) form a disordered region. A compositionally biased stretch (basic and acidic residues) spans 53–70 (EKKEKERISENYSDKSDV). Phosphoserine is present on residues Ser-61, Ser-65, Ser-68, Ser-223, Ser-232, Ser-233, and Ser-245. Residues 235–266 (SRMFSNPDNGSPAMTHRNLTSSSLNDISDKPE) are disordered. Phosphothreonine occurs at positions 249 and 254. A compositionally biased stretch (polar residues) spans 251 to 260 (RNLTSSSLND). A phosphoserine mark is found at Ser-256, Ser-257, and Ser-262. Residues 467–491 (IQALSAILFIYLATVTNAITFGGLL) traverse the membrane as a helical segment. At 492-501 (GDATDNMQGV) the chain is on the extracellular side. The helical transmembrane segment at 502–520 (LESFLGTAVSGAIFCLFAG) threads the bilayer. Gln-521 is a topological domain (cytoplasmic). A discontinuously helical transmembrane segment spans residues 522–542 (PLTILSSTGPVLVFERLLFNF). Residues 543 to 550 (SKDHNFDY) lie on the Extracellular side of the membrane. Residues 551–571 (LEFRLWIGLWSAFMCLVLVAT) traverse the membrane as a helical segment. Topologically, residues 572–585 (DASFLVQYFTRFTE) are cytoplasmic. Residues 586-609 (EGFSSLISFIFIYDAFKKMIKLAD) traverse the membrane as a helical segment. The Extracellular segment spans residues 610–692 (YYPINSDFKV…GNNCDFVPDI (83 aa)). A helical membrane pass occupies residues 693–710 (TLMSFILFLGTYTSSMAM). Residues 711 to 725 (KKFKTSRYFPTTARK) lie on the Cytoplasmic side of the membrane. The helical transmembrane segment at 726-745 (LISDFAIILSILIFCVIDAL) threads the bilayer. Over 746 to 779 (VGVDTPKLIVPSEFKPTSPNRGWFVPPFGGNPWW) the chain is Extracellular. The segment at 748–779 (VDTPKLIVPSEFKPTSPNRGWFVPPFGGNPWW) is interaction with CA4. The helical transmembrane segment at 780–807 (VCLAAAIPALLVTILIFMDQQITAVIVN) threads the bilayer. Over 808-819 (RKEHKLKKGAGY) the chain is Cytoplasmic. A helical transmembrane segment spans residues 820–836 (HLDLFWVAILMVVCSFM). Ala-837 is a topological domain (extracellular). The chain crosses the membrane as a discontinuously helical span at residues 838-855 (LPWYVAATVISIAHIDSL). Residues 856 to 877 (KMETETSAPGEQPKFLGVREQR) are Cytoplasmic-facing. The chain crosses the membrane as a helical span at residues 878–894 (VTGTLVFILTGLSVFMA). Residues 895-901 (PILKFIP) are Extracellular-facing. Residues 902-918 (MPVLYGVFLYMGVASLN) traverse the membrane as a helical segment. At 919-960 (GVQFMDRLKLLLMPLKHQPDFIYLRHVPLRRVHLFTFLQVLC) the chain is on the cytoplasmic side. The discontinuously helical intramembrane region spans 961–986 (LALLWILKSTVAAIIFPVMILALVAV). Topologically, residues 987 to 1079 (RKGMDYLFSQ…STFLERHTSC (93 aa)) are cytoplasmic. Residues 1002 to 1004 (LDD) are CA2-binding. Residues 1012–1079 (KKKEDEKKKK…STFLERHTSC (68 aa)) are disordered. Phosphoserine occurs at positions 1026 and 1029. Residues 1030–1033 (DNDD) form a CA2-binding region. Phosphoserine is present on residues Ser-1034 and Ser-1044. The segment at 1057–1059 (FLS) is required for basolateral targeting. Over residues 1062–1079 (KPLDRERSSTFLERHTSC) the composition is skewed to basic and acidic residues. Ser-1069 is modified (phosphoserine).

This sequence belongs to the anion exchanger (TC 2.A.31) family. In terms of assembly, homodimer. Interacts with CA2/carbonic anhydrase 2 and CA4/carbonic anhydrase 4 which may regulate transporter activity. Isoform 1 but not isoform 2 interacts with AHCYL1 (via PEST domain when phosphorylated); the interaction increases SLC4A4 isoform 1 activity. Interacts with AHCYL2. In terms of processing, phosphorylation of Ser-1026 by PKA increases the binding of CA2 and changes the Na(+):HCO3(-) stoichiometry of the transporter from 3:1 to 2:1. Phosphorylated in presence of STK39 and dephosphorylated in presence of PP1 phosphatase; phosphorylation seems to inhibit SLC4A4 activity. Post-translationally, N-glycosylated. May not be necessary for the transporter basic functions. Isoform 1 is specifically expressed in pancreatic ducts and acini. Also expressed in parotid acinar cells and in the colonic crypts.

Its subcellular location is the basolateral cell membrane. It is found in the cell membrane. The enzyme catalyses 2 hydrogencarbonate(out) + Na(+)(out) = 2 hydrogencarbonate(in) + Na(+)(in). The catalysed reaction is 3 hydrogencarbonate(out) + Na(+)(out) = 3 hydrogencarbonate(in) + Na(+)(in). Its activity is regulated as follows. Activated by cyclic AMP. Electrogenic sodium/bicarbonate cotransporter with a Na(+):HCO3(-) stoichiometry varying from 1:2 to 1:3. May regulate bicarbonate influx/efflux at the basolateral membrane of cells and regulate intracellular pH. The chain is Electrogenic sodium bicarbonate cotransporter 1 (Slc4a4) from Mus musculus (Mouse).